A 92-amino-acid polypeptide reads, in one-letter code: Small ribosomal subunit protein uS15c (92 aa).

Belongs to the universal ribosomal protein uS15 family. Part of the 30S ribosomal subunit.

It localises to the plastid. It is found in the chloroplast. This is Small ribosomal subunit protein uS15c (rps15) from Guizotia abyssinica (Niger).